Reading from the N-terminus, the 212-residue chain is Thymidylate kinase (212 aa).

An ATP-binding site is contributed by 7-14; the sequence is GIEGCGKS.

Belongs to the thymidylate kinase family.

It catalyses the reaction dTMP + ATP = dTDP + ADP. In terms of biological role, phosphorylation of dTMP to form dTDP in both de novo and salvage pathways of dTTP synthesis. This is Thymidylate kinase from Trichlorobacter lovleyi (strain ATCC BAA-1151 / DSM 17278 / SZ) (Geobacter lovleyi).